The following is a 1207-amino-acid chain: Brassinosteroid LRR receptor kinase (1207 aa).

Residues 1 to 34 (MKAHKTVFNQHPLSLNKLFFVLLLIFFLPPASPA) form the signal peptide. The Cys pair 1 motif lies at 71-78 (CSFTGVSC). LRR repeat units follow at residues 109–131 (NLES…AKSQ), 135–157 (TLDS…SSFG), 161–181 (NLKS…EMLK), 186–207 (SLQV…PWVS), 213–234 (ELEF…LDFK), 235–257 (NLSY…KDCS), 258–280 (NLQH…LSSC), 282–304 (KLSF…PSES), 305–325 (LQYL…QLAD), 329–350 (TVVE…SLGE), 353–374 (SLEL…DTLS), 378–400 (NIKT…FSNL), 402–423 (KLET…GICK), 428–450 (NLKV…LSNC), 452–474 (QLVS…LGSL), 476–499 (KLKD…MYLQ), 500–523 (ALEN…SNCT), 524–547 (KLNW…GRLS), 548–570 (NLAI…LGNC), and 572–594 (SLIW…LFKQ). The N-linked (GlcNAc...) asparagine glycan is linked to Asn-119. Asn-166 and Asn-196 each carry an N-linked (GlcNAc...) asparagine glycan. Residues Asn-235 and Asn-245 are each glycosylated (N-linked (GlcNAc...) asparagine). The N-linked (GlcNAc...) asparagine glycan is linked to Asn-287. Asn-339 and Asn-363 each carry an N-linked (GlcNAc...) asparagine glycan. Asn-412 and Asn-449 each carry an N-linked (GlcNAc...) asparagine glycan. A glycan (N-linked (GlcNAc...) asparagine) is linked at Asn-521. N-linked (GlcNAc...) asparagine glycosylation is found at Asn-556, Asn-584, Asn-646, and Asn-662. LRR repeat units follow at residues 664–686 (SMIF…LGAM), 688–711 (YLSI…GGLK), 712–735 (NVAI…TSLT), and 736–758 (LLGE…APFD). Residues Asn-724, Asn-746, and Asn-767 are each glycosylated (N-linked (GlcNAc...) asparagine). Positions 771–779 (CGYPLPIPC) match the Cys pair 2 motif. The helical transmembrane segment at 803 to 823 (SVAMGLLFSLFCIFGLIIVAI) threads the bilayer. A Protein kinase domain is found at 888–1163 (FHNDSLVGSG…IQVMAMFKEI (276 aa)). ATP is bound by residues 894–902 (VGSGGFGDV) and Lys-916. Asp-1014 functions as the Proton acceptor in the catalytic mechanism.

It belongs to the protein kinase superfamily. Ser/Thr protein kinase family.

The protein localises to the cell membrane. The catalysed reaction is L-seryl-[protein] + ATP = O-phospho-L-seryl-[protein] + ADP + H(+). It carries out the reaction L-threonyl-[protein] + ATP = O-phospho-L-threonyl-[protein] + ADP + H(+). Its function is as follows. Receptor with a serine/threonine-protein kinase activity. Regulates, in response to brassinosteroid binding, a signaling cascade involved in plant development, including expression of light- and stress-regulated genes, promotion of cell elongation, normal leaf and chloroplast senescence, and flowering. May be involved in a feedback regulation of brassinosteroid biosynthesis. May be also involved in the perception of systemin, a peptide hormone responsible for the systemic activation of defense genes in leaves of wounded plants. This Solanum lycopersicum (Tomato) protein is Brassinosteroid LRR receptor kinase (CURL3).